The primary structure comprises 145 residues: Basic phospholipase A2 cPm08 (145 aa).

The N-terminal stretch at methionine 1–alanine 21 is a signal peptide. The propeptide occupies isoleucine 22–leucine 27. 7 disulfide bridges follow: cysteine 38/cysteine 98, cysteine 54/cysteine 144, cysteine 56/cysteine 72, cysteine 71/cysteine 125, cysteine 78/cysteine 118, cysteine 87/cysteine 111, and cysteine 105/cysteine 116. Residues tyrosine 55, glycine 57, and glycine 59 each contribute to the Ca(2+) site. Histidine 75 is an active-site residue. Aspartate 76 contacts Ca(2+). Residue aspartate 119 is part of the active site.

Belongs to the phospholipase A2 family. Group I subfamily. D49 sub-subfamily. Ca(2+) serves as cofactor. As to expression, expressed by the venom gland.

It localises to the secreted. It carries out the reaction a 1,2-diacyl-sn-glycero-3-phosphocholine + H2O = a 1-acyl-sn-glycero-3-phosphocholine + a fatty acid + H(+). Its function is as follows. PLA2 catalyzes the calcium-dependent hydrolysis of the 2-acyl groups in 3-sn-phosphoglycerides. This Laticauda semifasciata (Black-banded sea krait) protein is Basic phospholipase A2 cPm08.